A 149-amino-acid polypeptide reads, in one-letter code: D-aminoacyl-tRNA deacylase (149 aa).

The Gly-cisPro motif, important for rejection of L-amino acids signature appears at 137 to 138 (GP).

The protein belongs to the DTD family. Homodimer.

It is found in the cytoplasm. The enzyme catalyses glycyl-tRNA(Ala) + H2O = tRNA(Ala) + glycine + H(+). It carries out the reaction a D-aminoacyl-tRNA + H2O = a tRNA + a D-alpha-amino acid + H(+). In terms of biological role, an aminoacyl-tRNA editing enzyme that deacylates mischarged D-aminoacyl-tRNAs. Also deacylates mischarged glycyl-tRNA(Ala), protecting cells against glycine mischarging by AlaRS. Acts via tRNA-based rather than protein-based catalysis; rejects L-amino acids rather than detecting D-amino acids in the active site. By recycling D-aminoacyl-tRNA to D-amino acids and free tRNA molecules, this enzyme counteracts the toxicity associated with the formation of D-aminoacyl-tRNA entities in vivo and helps enforce protein L-homochirality. In Herminiimonas arsenicoxydans, this protein is D-aminoacyl-tRNA deacylase.